Consider the following 198-residue polypeptide: Formate-dependent nitrite reductase complex subunit NrfG (198 aa).

TPR repeat units follow at residues 73-106 (SEQWALLGEYYLWQNDYSNSLLAYRQALQLRGEN) and 144-177 (ITALMLLASDAFMQANYAQAIELWQKVMDLNSPR).

In terms of biological role, required for formate-dependent nitrite reduction. Not required for the biosynthesis of any of the c-type cytochromes nor for the secretion of the periplasmic cytochromes. The chain is Formate-dependent nitrite reductase complex subunit NrfG (nrfG) from Escherichia coli O157:H7.